A 536-amino-acid chain; its full sequence is Plasmepsin V (536 aa).

Positions 1-34 (MVGASLGPPGRGSLSRLIRLVICVLTLCALSVQG) are cleaved as a signal peptide. The Lumenal segment spans residues 35–492 (RSESTEGHSK…RKDNIFLKIP (458 aa)). The 401-residue stretch at 62 to 462 (YFLDIDIGTP…DIQKNRIGFV (401 aa)) folds into the Peptidase A1 domain. The active site involves aspartate 80. Intrachain disulfides connect cysteine 90/cysteine 172, cysteine 93/cysteine 96, cysteine 117/cysteine 128, cysteine 122/cysteine 133, cysteine 220/cysteine 466, cysteine 337/cysteine 382, and cysteine 391/cysteine 427. Residues 244–258 (SKSVSGQGSGPVSES) show a composition bias toward low complexity. A disordered region spans residues 244-264 (SKSVSGQGSGPVSESLSESGE). Aspartate 313 is a catalytic residue. Residues 493 to 513 (FFYLYSLFVVFALSVLLSLVF) form a helical membrane-spanning segment. Residues 514-536 (YVRRLYHMEYSPLPSEGKAPADA) lie on the Cytoplasmic side of the membrane.

It belongs to the peptidase A1 family. In terms of assembly, component of a complex composed of SPC25 and PMV; the interaction is mediated via the transmembrane domains. The complex interacts with the SEC61 channel-forming translocon complex and is involved in the recognition and import of PEXEL motif-containing proteins into the ER for subsequent export. Post-translationally, it is not clear if the zymogen has a cleavable propeptide. Cleavage of the putative propeptide is dispensable for catalytic activity.

It is found in the endoplasmic reticulum membrane. With respect to regulation, inhibited by peptidomimetic inhibitors such as WEHI-842. Its function is as follows. During the asexual blood stage, plays an essential role in the export of several proteins into the host erythrocytes by cleaving the pentameric localization motif RxLxE/Q/D (termed Plasmodium export element (PEXEL)) located downstream of the N-terminal secretory signal sequence. Specifically, cleaves after the leucine residue in the RxLxE/Q/D (or RxLxxE) motif of exported proteins including EMP1. Also, by regulating protein export, plays an essential role in gametocyte development and thus parasite transmission to the mosquito vector. The protein is Plasmepsin V of Plasmodium vivax (strain Salvador I).